A 435-amino-acid polypeptide reads, in one-letter code: E3 ubiquitin-protein ligase PUB22 (435 aa).

The 76-residue stretch at 6–81 folds into the U-box domain; it reads EIPSFFLCPI…QSWCTLNASY (76 aa).

Interacts with RPN12A. Binds to EXO70B2. Post-translationally, auto-ubiquitinated leading to degradation via the 26S proteasome. This Auto-ubiquitination is repressed by the bacterial elicitor flg22 thus leading to a transiently increased protein stabilization and accumulation.

Its subcellular location is the cytoplasm. It catalyses the reaction S-ubiquitinyl-[E2 ubiquitin-conjugating enzyme]-L-cysteine + [acceptor protein]-L-lysine = [E2 ubiquitin-conjugating enzyme]-L-cysteine + N(6)-ubiquitinyl-[acceptor protein]-L-lysine.. Its pathway is protein modification; protein ubiquitination. E3 ubiquitin-protein ligase that negatively regulates water stress response. May control in coordination with PUB23 a drought signaling pathway by ubiquitinating cytosolic RPN12a. Acts as a negative regulator of the immunity triggered by the pathogen-associated molecular patterns (PAMPs), in association with PUB23 and PUB24. Regulates EXO70B2 ubiquitination and degradation via the 26S proteasome to attenuate PAMP-induced signaling. This is E3 ubiquitin-protein ligase PUB22 from Arabidopsis thaliana (Mouse-ear cress).